The sequence spans 208 residues: Glycerol-3-phosphate acyltransferase (208 aa).

5 helical membrane-spanning segments follow: residues 4–24 (LALSMIIFAYLLGSISSAVLI), 56–76 (VAVLLCDMLKGTIPVWGGYFL), 80–100 (PFMLGLVAIAACLGHMYPIFF), 117–137 (PIGLDLTAMVMATWLVVVVLF), and 139–159 (YSSLAALVTVLLAPLYTWLIK).

This sequence belongs to the PlsY family. In terms of assembly, probably interacts with PlsX.

It is found in the cell inner membrane. It carries out the reaction an acyl phosphate + sn-glycerol 3-phosphate = a 1-acyl-sn-glycero-3-phosphate + phosphate. It participates in lipid metabolism; phospholipid metabolism. In terms of biological role, catalyzes the transfer of an acyl group from acyl-phosphate (acyl-PO(4)) to glycerol-3-phosphate (G3P) to form lysophosphatidic acid (LPA). This enzyme utilizes acyl-phosphate as fatty acyl donor, but not acyl-CoA or acyl-ACP. The chain is Glycerol-3-phosphate acyltransferase from Vibrio cholerae serotype O1 (strain ATCC 39541 / Classical Ogawa 395 / O395).